The chain runs to 1371 residues: Serine protease pic autotransporter (1371 aa).

Residues 1–55 (MNKVYSLKYCPVTGGLIVVSELASRVIKKTCRRLTHILLAGIPAVYLYYPQISQA) form the signal peptide. The region spanning 56-301 (GIVRSDIAYQ…NVIPTDYLNQ (246 aa)) is the Peptidase S6 domain. Residues H127, D155, and S258 each act as charge relay system in the active site. Residues 1105–1371 (DTNGDAGAWA…AVNANFRYMF (267 aa)) form the Autotransporter domain.

Post-translationally, cleaved to release the mature protein from the outer membrane.

The protein resides in the periplasm. Its subcellular location is the secreted. It is found in the cell surface. It localises to the cell outer membrane. Functionally, involved in virulence of uropathogenic E.coli although it is not known how it contributes to it. Has no mucinase activity. The protein is Serine protease pic autotransporter (pic) of Escherichia coli O6:H1 (strain CFT073 / ATCC 700928 / UPEC).